The chain runs to 636 residues: DNA-directed RNA polymerase subunit gamma (636 aa).

4 residues coordinate Zn(2+): cysteine 71, cysteine 73, cysteine 86, and cysteine 89. 3 residues coordinate Mg(2+): aspartate 467, aspartate 469, and aspartate 471.

Belongs to the RNA polymerase beta' chain family. RpoC1 subfamily. As to quaternary structure, in cyanobacteria the RNAP catalytic core is composed of 2 alpha, 1 beta, 1 beta', 1 gamma and 1 omega subunit. When a sigma factor is associated with the core the holoenzyme is formed, which can initiate transcription. It depends on Mg(2+) as a cofactor. The cofactor is Zn(2+).

The catalysed reaction is RNA(n) + a ribonucleoside 5'-triphosphate = RNA(n+1) + diphosphate. Its function is as follows. DNA-dependent RNA polymerase catalyzes the transcription of DNA into RNA using the four ribonucleoside triphosphates as substrates. The protein is DNA-directed RNA polymerase subunit gamma of Picosynechococcus sp. (strain ATCC 27264 / PCC 7002 / PR-6) (Agmenellum quadruplicatum).